Consider the following 196-residue polypeptide: MDVTIQHPWFKRALGPFYPSRLFDQFFGEGLFEYDLLPFLSSTISPYYRQSLFRTVLDSGISELMTHMWFVMHQPHAGNPKNNPVKVRSDRDKFVIFLDVKHFSPEDLTVKVLEDFVEIHGKHNERQDDHGYISREFHRRYRLPSNVDQSALSCSLSADGMLTFSGPKVQSGLDAGHSERAIPVSREEKPSSAPSS.

Residue M1 is modified to N-acetylmethionine. Residues 1–63 (MDVTIQHPWF…RTVLDSGISE (63 aa)) form a required for complex formation with BFSP1 and BFSP2 region. Position 6 is a deamidated glutamine; partial (Q6). Residue S45 is modified to Phosphoserine. At Q50 the chain carries Deamidated glutamine; partial. Residues 76–185 (HAGNPKNNPV…GHSERAIPVS (110 aa)) form the sHSP domain. 2 positions are modified to N6-acetyllysine: K93 and K122. Residue H123 participates in Zn(2+) binding. N124 carries the deamidated asparagine; partial modification. Residues E125 and H130 each contribute to the Zn(2+) site. S145 carries the phosphoserine modification. A Deamidated asparagine; partial modification is found at N146. Residues 168–196 (KVQSGLDAGHSERAIPVSREEKPSSAPSS) form a disordered region. At Q170 the chain carries Deamidated glutamine; partial. Over residues 176-190 (GHSERAIPVSREEKP) the composition is skewed to basic and acidic residues. H177 is a Zn(2+) binding site. Residue S185 is glycosylated (O-linked (GlcNAc) serine).

Belongs to the small heat shock protein (HSP20) family. In terms of assembly, heteropolymer composed of three CRYAA and one CRYAB subunits. Inter-subunit bridging via zinc ions enhances stability, which is crucial as there is no protein turn over in the lens. Can also form homodimers and homotetramers (dimers of dimers) which serve as the building blocks of homooligomers. Within homooligomers, the zinc-binding motif is created from residues of 3 different molecules. His-123 and Glu-125 from one molecule are ligands of the zinc ion, and His-130 and His-177 residues from additional molecules complete the site with tetrahedral coordination geometry. Part of a complex required for lens intermediate filament formation composed of BFSP1, BFSP2 and CRYAA. In terms of processing, acetylation at Lys-93 may increase chaperone activity. Undergoes age-dependent proteolytical cleavage at the C-terminus.

It is found in the cytoplasm. The protein localises to the nucleus. Its function is as follows. Contributes to the transparency and refractive index of the lens. Acts as a chaperone, preventing aggregation of various proteins under a wide range of stress conditions. Required for the correct formation of lens intermediate filaments as part of a complex composed of BFSP1, BFSP2 and CRYAA. The chain is Alpha-crystallin A chain (Cryaa) from Mus musculus (Mouse).